Reading from the N-terminus, the 1275-residue chain is MRSKARARKLAKSDGDVVNNMYEPDPDLLAGQSAEEETEDGILSPIPMGPPSPFPTSEDFTPKEGSPYEAPVYIPEDIPIPPDFELRESSIPGAGLGIWAKRKMEIGERFGPYVVTPRAALKEADFGWEMLTDTEVSSQESCIKKQISEDLGSEKFCVDANQAGSGSWLKYIRVACSCDDQNLAMCQINEQIYYKVIKDIEPGEELLVHVKEGAYSLGVMAPSLDEDPTFRCDECDELFQCRLDLRRHKKYACSSAGAQLYEGLGEELKPEGLGVGSDGQAHECKDCERMFPNKYSLEQHMIVHTEEREYKCDQCPKAFNWKSNLIRHQMSHDSGKRFECENCVKVFTDPSNLQRHIRSQHVGARAHACPDCGKTFATSSGLKQHKHIHSTVKPFICEVCHKSYTQFSNLCRHKRMHADCRTQIKCKDCGQMFSTTSSLNKHRRFCEGKNHYTPGSIFTPGLPLTPSPMMDKTKPSPTLNHGGLGFSEYFPSRPHPGSLPFSAAPPAFPALTPGFPGIFPPSLYPRPPLLPPTPLLKSPLNHAQDAKLPSPLGNPALPLVSAVSNSSQGATAATGSEEKFDGRLEDAYAEKVKNRSPDMSDGSDFEDINTTTGTDLDTTTGTGSDLDSDLDSDRDKGKDKGKPVESKPEFGGASVPPGAMNSVAEVPAFYSQHSFFPPPEEQLLTASGAAGDSIKAIASIAEKYFGPGFMSMQEKKLGSLPYHSVFPFQFLPNFPHSLYPFTDRALAHNLLVKAEPKSPRDALKVGGPSAECPFDLTTKPKEAKPALLAPKVPLIPSSGEEQPLDLSIGSRARASQNGGGREPRKNHVYGERKPGVSEGLPKVCPAQLPQQPSLHYAKPSPFFMDPIYRVEKRKVADPVGVLKEKYLRPSPLLFHPQMSAIETMTEKLESFAAMKADSGSSLQPLPHHPFNFRSPPPTLSDPILRKGKERYTCRYCGKIFPRSANLTRHLRTHTGEQPYRCKYCDRSFSISSNLQRHVRNIHNKEKPFKCHLCNRCFGQQTNLDRHLKKHEHEGAPVSQHSGVLTNHLGTSASSPTSESDNHALLDEKEDSYFSEIRNFIANSEMNQASTRMDKRPEIQDLDSNPPCPGSASAKPEDVEEEEEEELEEEDDDSLAGKSQEDTVSPTPEPQGVYEDEEDEEPPSLTMGFDHTRRCVEERGGGLLALEPTPTFGKGLDLRRAAEEAFEVKDVLNSTLDSEVLKQTLYRQAKNQAYAMMLSLSEDTPLHAPSQSSLDAWLNITGPSSESGAFNPINHL.

Residues 1–10 show a composition bias toward basic residues; it reads MRSKARARKL. A disordered region spans residues 1–66; it reads MRSKARARKL…SEDFTPKEGS (66 aa). Positions 82-211 constitute an SET domain; that stretch reads PDFELRESSI…PGEELLVHVK (130 aa). The C2H2-type 1; degenerate zinc-finger motif lies at 230 to 255; that stretch reads FRCDECDELFQCRLDLRRHKKYACSS. 5 C2H2-type zinc fingers span residues 282–304, 310–332, 338–361, 367–389, and 395–417; these read HECK…MIVH, YKCD…QMSH, FECE…RSQH, HACP…KHIH, and FICE…KRMH. The segment at 424-446 adopts a C2H2-type 7; atypical zinc-finger fold; the sequence is IKCKDCGQMFSTTSSLNKHRRFC. Disordered regions lie at residues 592-658 and 789-838; these read VKNR…VPPG and APKV…GVSE. The span at 610-625 shows a compositional bias: low complexity; sequence TTTGTDLDTTTGTGSD. Composition is skewed to basic and acidic residues over residues 631–648 and 821–835; these read DSDR…ESKP and REPR…RKPG. Residues 680-1038 are interaction with CTBP1, CTBP2 and ZNF516; sequence EEQLLTASGA…KHEHEGAPVS (359 aa). Positions 740–1275 are mediates interaction with SKI and regulation of TGF-beta signaling; sequence PFTDRALAHN…SGAFNPINHL (536 aa). 3 consecutive C2H2-type zinc fingers follow at residues 951–973, 979–1002, and 1008–1030; these read YTCR…LRTH, YRCK…RNIH, and FKCH…LKKH. 2 disordered regions span residues 1027–1065 and 1084–1169; these read LKKH…HALL and EMNQ…MGFD. Residues 1038–1058 are compositionally biased toward polar residues; that stretch reads SQHSGVLTNHLGTSASSPTSE. The segment covering 1117 to 1133 has biased composition (acidic residues); that stretch reads DVEEEEEEELEEEDDDS.

The protein belongs to the PRDM16 family. In terms of assembly, interacts with CEBPA, CEBPB and CEBPD; the interaction is direct. Interacts with PPARG and PPARA; controls brown adipocytes. Interacts with CTBP1 and CTBP2; represses the expression of WAT-specific genes. Interacts with PPARGC1A and PPARGC1B; interaction with PPARGC1A or PPARGC1B activates the transcription of BAT-specific gene. Interacts with HDAC1, SKI and SMAD2; the interaction with SKI promotes the recruitment of SMAD3-HDAC1 complex on the promoter of TGF-beta target genes. Interacts with ZNF516; the interaction is direct and may play a role in the transcription of brown adipose tissue-specific gene. Enriched in BAT compared to WAT. Detected in heart, lung, kidney and brain. Expressed in nuclei of cardiomyocytes.

Its subcellular location is the nucleus. The protein resides in the cytoplasm. It catalyses the reaction L-lysyl(9)-[histone H3] + S-adenosyl-L-methionine = N(6)-methyl-L-lysyl(9)-[histone H3] + S-adenosyl-L-homocysteine + H(+). Functionally, binds DNA and functions as a transcriptional regulator. Displays histone methyltransferase activity and monomethylates 'Lys-9' of histone H3 (H3K9me1) in vitro. Probably catalyzes the monomethylation of free histone H3 in the cytoplasm which is then transported to the nucleus and incorporated into nucleosomes where SUV39H methyltransferases use it as a substrate to catalyze histone H3 'Lys-9' trimethylation. Likely to be one of the primary histone methyltransferases along with MECOM/PRDM3 that direct cytoplasmic H3K9me1 methylation. Functions in the differentiation of brown adipose tissue (BAT) which is specialized in dissipating chemical energy in the form of heat in response to cold or excess feeding while white adipose tissue (WAT) is specialized in the storage of excess energy and the control of systemic metabolism. Together with CEBPB, regulates the differentiation of myoblastic precursors into brown adipose cells. Functions as a repressor of TGF-beta signaling. This is Histone-lysine N-methyltransferase PRDM16 from Mus musculus (Mouse).